Reading from the N-terminus, the 1172-residue chain is Thrombospondin-2 (1172 aa).

The N-terminal stretch at 1-18 (MLWALALLALGIGPRASA) is a signal peptide. The region spanning 19 to 215 (GDHVKDTSFD…LQNVHLVFAD (197 aa)) is the Laminin G-like domain. Residues 19-232 (GDHVKDTSFD…KKGCQHSQGA (214 aa)) are heparin-binding. Residues asparagine 151, asparagine 316, and asparagine 330 are each glycosylated (N-linked (GlcNAc...) asparagine). Residues 318-375 (SACVQEGRIFAENETWVVDSCTTCTCKKFKTVCHQITCSPATCANPSFVEGECCPSCS) form the VWFC domain. TSP type-1 domains are found at residues 381-431 (DEGW…GKCD), 437-492 (NGGW…DPCP), and 494-549 (DGRW…RSCP). 27 disulfides stabilise this stretch: cysteine 393–cysteine 425, cysteine 397–cysteine 430, cysteine 408–cysteine 415, cysteine 449–cysteine 486, cysteine 453–cysteine 491, cysteine 464–cysteine 476, cysteine 506–cysteine 543, cysteine 510–cysteine 548, cysteine 521–cysteine 533, cysteine 553–cysteine 564, cysteine 558–cysteine 574, cysteine 577–cysteine 588, cysteine 594–cysteine 610, cysteine 601–cysteine 619, cysteine 622–cysteine 646, cysteine 652–cysteine 665, cysteine 659–cysteine 678, cysteine 680–cysteine 691, cysteine 707–cysteine 715, cysteine 720–cysteine 740, cysteine 756–cysteine 776, cysteine 779–cysteine 799, cysteine 815–cysteine 835, cysteine 838–cysteine 858, cysteine 876–cysteine 896, cysteine 912–cysteine 932, and cysteine 948–cysteine 1169. An N-linked (GlcNAc...) asparagine glycan is attached at asparagine 457. An EGF-like 1 domain is found at 549–589 (PIDGCLSNPCFPGAKCNSFPDGSWSCGSCPVGFLGNGTHCE). A glycan (N-linked (GlcNAc...) asparagine) is linked at asparagine 584. The 45-residue stretch at 648–692 (PENPCKDKTHSCHKNAECIYLGHFSDPMYKCECQIGYAGDGLICG) folds into the EGF-like 2 domain. 8 TSP type-3 repeats span residues 693–728 (EDSD…NSGQ), 729–764 (EDFD…NPRQ), 765–787 (LDYD…NPAQ), 788–823 (IDTD…NTDQ), 824–846 (RDTD…NPDQ), 847–884 (IDQD…NSNQ), 885–920 (ADHD…NPDQ), and 921–956 (EDSD…AITE). Asparagine 710 is a glycosylation site (N-linked (GlcNAc...) asparagine). Residues 727–752 (GQEDFDKDGIGDACDEDDDNDGVSDE) are disordered. Positions 739 to 749 (ACDEDDDNDGV) are enriched in acidic residues. Residues 846-938 (QIDQDNDLVG…GDICKDDFDN (93 aa)) form a disordered region. A compositionally biased stretch (acidic residues) spans 847–866 (IDQDNDLVGDQCDNNEDIDD). Residues 870 to 884 (QNNQDNCPYISNSNQ) are compositionally biased toward polar residues. The span at 885–895 (ADHDNDGKGDA) shows a compositional bias: basic and acidic residues. The span at 896–905 (CDSDDDNDGV) shows a compositional bias: acidic residues. The span at 925–935 (GDGRGDICKDD) shows a compositional bias: basic and acidic residues. The Cell attachment site signature appears at 928–930 (RGD). Residues 960–1172 (RNFQMVPLDP…SDLKYECRDA (213 aa)) form the TSP C-terminal domain. The N-linked (GlcNAc...) asparagine glycan is linked to asparagine 1069.

The protein belongs to the thrombospondin family. In terms of assembly, homotrimer; disulfide-linked. Can bind to fibrinogen, fibronectin, laminin and type V collagen. Interacts (via the TSP type I repeats) with CD36; the interaction conveys an antiangiogenic effect. Interacts (via the TSP type I repeats) with HRG; the interaction blocks the antiangiogenic effect of THBS2 with CD36. Can bind to fibrinogen, fibronectin, laminin.

In terms of biological role, adhesive glycoprotein that mediates cell-to-cell and cell-to-matrix interactions. Ligand for CD36 mediating antiangiogenic properties. In Mus musculus (Mouse), this protein is Thrombospondin-2 (Thbs2).